Here is a 477-residue protein sequence, read N- to C-terminus: uncharacterized protein (477 aa).

A run of 12 helical transmembrane segments spans residues 31–51 (LLRL…LLGT), 60–80 (LGVP…VAPF), 103–123 (LWFG…SLIL), 130–150 (MGPA…AGVG), 177–197 (LLYV…GWLL), 205–225 (LIRV…IALW), 248–268 (AWGL…VMVG), 291–311 (VGQT…GFIW), 334–354 (IVAF…LFFA), 359–379 (IGLG…MVVV), 384–404 (GIAL…AVFI), and 433–453 (VVYV…GPLV).

The protein belongs to the PucC family.

Its subcellular location is the cell membrane. This is an uncharacterized protein from Rhodobacter capsulatus (Rhodopseudomonas capsulata).